The sequence spans 582 residues: Formate--tetrahydrofolate ligase (582 aa).

65–72 contributes to the ATP binding site; sequence TPLGEGKT.

The protein belongs to the formate--tetrahydrofolate ligase family.

It carries out the reaction (6S)-5,6,7,8-tetrahydrofolate + formate + ATP = (6R)-10-formyltetrahydrofolate + ADP + phosphate. Its pathway is one-carbon metabolism; tetrahydrofolate interconversion. This is Formate--tetrahydrofolate ligase from Vibrio campbellii (strain ATCC BAA-1116).